Reading from the N-terminus, the 103-residue chain is Protein FMC1 homolog (103 aa).

The protein belongs to the FMC1 family.

The polypeptide is Protein FMC1 homolog (Nematostella vectensis (Starlet sea anemone)).